Consider the following 265-residue polypeptide: Phosphate import ATP-binding protein PstB 2 (265 aa).

An ABC transporter domain is found at 13–260 (FRTENLNVYY…PTKQATRDYV (248 aa)). 45-52 (GPSGCGKS) contributes to the ATP binding site.

It belongs to the ABC transporter superfamily. Phosphate importer (TC 3.A.1.7) family. In terms of assembly, the complex is composed of two ATP-binding proteins (PstB), two transmembrane proteins (PstC and PstA) and a solute-binding protein (PstS).

It is found in the cell inner membrane. It catalyses the reaction phosphate(out) + ATP + H2O = ADP + 2 phosphate(in) + H(+). Functionally, part of the ABC transporter complex PstSACB involved in phosphate import. Responsible for energy coupling to the transport system. This Synechococcus sp. (strain JA-2-3B'a(2-13)) (Cyanobacteria bacterium Yellowstone B-Prime) protein is Phosphate import ATP-binding protein PstB 2.